The primary structure comprises 149 residues: uncharacterized protein (149 aa).

Residues 12–31 (FKNLVIGAVSGVAAAYFLST) form a helical membrane-spanning segment.

Its subcellular location is the membrane. This is an uncharacterized protein from Streptococcus pyogenes serotype M6 (strain ATCC BAA-946 / MGAS10394).